The primary structure comprises 79 residues: Suppressor of tumorigenicity 20 protein (79 aa).

As to expression, expressed in leukocytes, lung, spleen, liver, heart, kidney, muscle and uterine cervix. Down-regulated in cervical cancer.

In terms of biological role, may act as a tumor suppressor. Promotes apoptosis of cancer cells. The chain is Suppressor of tumorigenicity 20 protein (ST20) from Homo sapiens (Human).